Consider the following 217-residue polypeptide: ITG-like peptide (217 aa).

The N-terminal stretch at 1 to 21 is a signal peptide; that stretch reads MHRTMAVTAVLVLSAAGAAHA. Positions 22–208 are excised as a propeptide; that stretch reads WGGLFNRFSS…REFVQHTAGE (187 aa).

As to expression, ITG-like peptide: Expressed in corpora cardiaca (CC), corpora allata (CA), antennal lobe (AL) and gnathal ganglion (GNG) (at protein level). Expression in AL detected in all animals, expression in GNG detected in most animals and in CA and CC detected in few animals (at protein level).

The protein localises to the secreted. The protein is ITG-like peptide of Agrotis ipsilon (Black cutworm moth).